The chain runs to 149 residues: D-aminoacyl-tRNA deacylase (149 aa).

The Gly-cisPro motif, important for rejection of L-amino acids motif lies at 137-138 (GP).

The protein belongs to the DTD family. Homodimer.

It is found in the cytoplasm. The catalysed reaction is glycyl-tRNA(Ala) + H2O = tRNA(Ala) + glycine + H(+). It catalyses the reaction a D-aminoacyl-tRNA + H2O = a tRNA + a D-alpha-amino acid + H(+). In terms of biological role, an aminoacyl-tRNA editing enzyme that deacylates mischarged D-aminoacyl-tRNAs. Also deacylates mischarged glycyl-tRNA(Ala), protecting cells against glycine mischarging by AlaRS. Acts via tRNA-based rather than protein-based catalysis; rejects L-amino acids rather than detecting D-amino acids in the active site. By recycling D-aminoacyl-tRNA to D-amino acids and free tRNA molecules, this enzyme counteracts the toxicity associated with the formation of D-aminoacyl-tRNA entities in vivo and helps enforce protein L-homochirality. This Syntrophobacter fumaroxidans (strain DSM 10017 / MPOB) protein is D-aminoacyl-tRNA deacylase.